The following is a 664-amino-acid chain: Protein cueball (664 aa).

Positions 1–21 (MRNLGIAVTFAVLLVIGYVTA) are cleaved as a signal peptide. Over 22–552 (LEWDAVVTTD…VTYCKNSFNR (531 aa)) the chain is Extracellular. N-linked (GlcNAc...) asparagine glycosylation is found at Asn40, Asn140, and Asn188. 3 LDL-receptor class B repeats span residues 115–157 (RKLY…ENHD), 168–211 (RHLY…DHYN), and 212–257 (NRIY…NSQY). 3 EGF-like domains span residues 367–399 (EIPI…FEGE), 402–438 (DRNI…ARCE), and 473–510 (EEYT…KRCE). 8 disulfide bridges follow: Cys371-Cys380, Cys375-Cys390, Cys406-Cys416, Cys410-Cys426, Cys428-Cys437, Cys477-Cys487, Cys481-Cys498, and Cys500-Cys509. Residue Asn431 is glycosylated (N-linked (GlcNAc...) asparagine). N-linked (GlcNAc...) asparagine glycosylation occurs at Asn491. Asn551 is a glycosylation site (N-linked (GlcNAc...) asparagine). Residues 553–573 (TVVYVSLAFTASLVTLVTILC) form a helical membrane-spanning segment. Residues 574–664 (TVRRMYERNR…KLPSCVAEKN (91 aa)) lie on the Cytoplasmic side of the membrane.

The protein belongs to the cueball family.

The protein resides in the cell membrane. In terms of biological role, has a role in spermatogenesis and oogenesis. This is Protein cueball from Aedes aegypti (Yellowfever mosquito).